Consider the following 946-residue polypeptide: Bifunctional glutamine synthetase adenylyltransferase/adenylyl-removing enzyme (946 aa).

The segment at 1–441 (MSLLNDAALH…EFNWVIGDDE (441 aa)) is adenylyl removase. The adenylyl transferase stretch occupies residues 448 to 946 (DQALSELWAL…VIKIWEKFLD (499 aa)).

Belongs to the GlnE family. It depends on Mg(2+) as a cofactor.

It catalyses the reaction [glutamine synthetase]-O(4)-(5'-adenylyl)-L-tyrosine + phosphate = [glutamine synthetase]-L-tyrosine + ADP. The enzyme catalyses [glutamine synthetase]-L-tyrosine + ATP = [glutamine synthetase]-O(4)-(5'-adenylyl)-L-tyrosine + diphosphate. Functionally, involved in the regulation of glutamine synthetase GlnA, a key enzyme in the process to assimilate ammonia. When cellular nitrogen levels are high, the C-terminal adenylyl transferase (AT) inactivates GlnA by covalent transfer of an adenylyl group from ATP to specific tyrosine residue of GlnA, thus reducing its activity. Conversely, when nitrogen levels are low, the N-terminal adenylyl removase (AR) activates GlnA by removing the adenylyl group by phosphorolysis, increasing its activity. The regulatory region of GlnE binds the signal transduction protein PII (GlnB) which indicates the nitrogen status of the cell. The chain is Bifunctional glutamine synthetase adenylyltransferase/adenylyl-removing enzyme from Psychromonas ingrahamii (strain DSM 17664 / CCUG 51855 / 37).